Consider the following 452-residue polypeptide: Phosphoglucosamine mutase (452 aa).

The active-site Phosphoserine intermediate is S103. 4 residues coordinate Mg(2+): S103, D243, D245, and D247. A Phosphoserine modification is found at S103.

This sequence belongs to the phosphohexose mutase family. Requires Mg(2+) as cofactor. Activated by phosphorylation.

The catalysed reaction is alpha-D-glucosamine 1-phosphate = D-glucosamine 6-phosphate. In terms of biological role, catalyzes the conversion of glucosamine-6-phosphate to glucosamine-1-phosphate. The protein is Phosphoglucosamine mutase of Lactobacillus acidophilus (strain ATCC 700396 / NCK56 / N2 / NCFM).